Consider the following 274-residue polypeptide: SIMKMDGSQQEENLDVISTGSLGVDLALGVGGLPRGRVVEIFGPESSGKTTLCLEAIAQCQKNGGICAFIDAEHAFDPIYARKLGVKVEELYLSQPDTGEQALEICDTLVRSGGIDMVVVDSVAALVPKAEIEGEMGDSHVGLQARLMSQALRKLTGHIKRTNTLVVFINQIRMKIGVMFGSPETTTGGNALKFYASVRLDIRRTGQIKKGDDVIGNETKVKVIKNKVAPPFRQAEFDILYGEGISWEGELIDLGVKHDIVEKSGAWYSYNGAK.

Position 43 to 50 (43 to 50 (GPESSGKT)) interacts with ATP.

It belongs to the RecA family.

The protein localises to the cytoplasm. Functionally, can catalyze the hydrolysis of ATP in the presence of single-stranded DNA, the ATP-dependent uptake of single-stranded DNA by duplex DNA, and the ATP-dependent hybridization of homologous single-stranded DNAs. It interacts with LexA causing its activation and leading to its autocatalytic cleavage. This Neisseria flavescens protein is Protein RecA.